Consider the following 366-residue polypeptide: Septin-1 (366 aa).

A Septin-type G domain is found at 22–295 (KGFDFTLMVA…EGYRARCLQS (274 aa)). A G1 motif region spans residues 32–39 (GESGLGKS). GTP contacts are provided by residues 32 to 39 (GESGLGKS), Thr66, Gly92, and 171 to 179 (KADALLPRE). The segment at 89–92 (DTPG) is G3 motif. A G4 motif region spans residues 170–173 (GKAD). Ser206 carries the post-translational modification Phosphoserine. 2 residues coordinate GTP: Gly229 and Arg244. Phosphoserine; by AURKB is present on Ser247. Phosphothreonine is present on Thr250. 2 positions are modified to phosphoserine; by AURKB: Ser306 and Ser314. The segment at 347 to 366 (EKMQAQMQQSQAQGEQSDVL) is disordered. Positions 349-366 (MQAQMQQSQAQGEQSDVL) are enriched in low complexity.

It belongs to the TRAFAC class TrmE-Era-EngA-EngB-Septin-like GTPase superfamily. Septin GTPase family. In terms of assembly, septins polymerize into heterooligomeric protein complexes that form filaments, and can associate with cellular membranes, actin filaments and microtubules. GTPase activity is required for filament formation. Interacts with AURKB.

It localises to the cytoplasm. The protein localises to the cytoskeleton. Its subcellular location is the microtubule organizing center. It is found in the centrosome. The protein resides in the midbody. Filament-forming cytoskeletal GTPase. May play a role in cytokinesis (Potential). The protein is Septin-1 of Rattus norvegicus (Rat).